Here is a 177-residue protein sequence, read N- to C-terminus: Disulfide bond formation protein B (177 aa).

The Cytoplasmic portion of the chain corresponds to 1–14 (MLALLKQFSEKRFV). Residues 15–31 (WFLLAFSSLALESTALY) traverse the membrane as a helical segment. Over 32-49 (FQYGMGLQPCVLCVYERL) the chain is Periplasmic. An intrachain disulfide couples Cys-41 to Cys-44. The helical transmembrane segment at 50-65 (AMIGLFVAGTIALLQP) threads the bilayer. Residues 66–72 (RVFILRL) are Cytoplasmic-facing. Residues 73–90 (IALALGLFSSIKGLLISF) form a helical membrane-spanning segment. Topologically, residues 91–145 (RHLDLQMNPAPWKQCEFIPNFPETLPFHQWFPFIFNPTGSCNESQWSLFGLTMVQ) are periplasmic. The cysteines at positions 105 and 131 are disulfide-linked. The helical transmembrane segment at 146 to 164 (WLVVIFSLYVVILTLLLIA) threads the bilayer. Over 165-177 (QVIKTRKQRRLFN) the chain is Cytoplasmic.

It belongs to the DsbB family.

It localises to the cell inner membrane. In terms of biological role, required for disulfide bond formation in some periplasmic proteins. Acts by oxidizing the DsbA protein. This chain is Disulfide bond formation protein B, found in Haemophilus influenzae (strain ATCC 51907 / DSM 11121 / KW20 / Rd).